A 518-amino-acid chain; its full sequence is Sensor protein kinase HptS (518 aa).

Transmembrane regions (helical) follow at residues Ile20–Trp40 and Gly222–Ile242. The 217-residue stretch at Glu297–Arg513 folds into the Histidine kinase domain. Residue His325 is modified to Phosphohistidine; by autocatalysis.

In terms of processing, autophosphorylated.

The protein resides in the cell membrane. The enzyme catalyses ATP + protein L-histidine = ADP + protein N-phospho-L-histidine.. In terms of biological role, member of the two-component regulatory system HptS/HptR that regulates genes involved in hexose phosphate transport system in response to changes in extracellular phosphate sources. May act as a sensor protein kinase which is autophosphorylated at a histidine residue and transfers its phosphate group to the conserved aspartic acid residue in the regulatory domain of HptS. In turn, HptS antagonizes CcpA-dependent transcription of a subset of CcpA-regulated genes involved in antibiotic susceptibility. In Staphylococcus aureus (strain Mu50 / ATCC 700699), this protein is Sensor protein kinase HptS (hptS).